Reading from the N-terminus, the 190-residue chain is Ion-translocating oxidoreductase complex subunit B (190 aa).

Residues 1 to 26 (MTALWIAIAALSALGLLFGLVLGYAA) are hydrophobic. Residues 32 to 90 (EEDPVAEQVDEILPQSQCGQCGYPGCRPYAEAVANGEMINKCAPGGEQVMLKLAELLNV) enclose the 4Fe-4S domain. [4Fe-4S] cluster-binding residues include Cys-49, Cys-52, Cys-57, Cys-73, Cys-115, Cys-118, Cys-121, Cys-125, Cys-145, Cys-148, Cys-151, and Cys-155. 2 4Fe-4S ferredoxin-type domains span residues 106–135 (QVAY…GATR) and 136–165 (AMHT…MRPV).

This sequence belongs to the 4Fe4S bacterial-type ferredoxin family. RnfB subfamily. In terms of assembly, the complex is composed of six subunits: RnfA, RnfB, RnfC, RnfD, RnfE and RnfG. [4Fe-4S] cluster serves as cofactor.

The protein localises to the cell inner membrane. In terms of biological role, part of a membrane-bound complex that couples electron transfer with translocation of ions across the membrane. The sequence is that of Ion-translocating oxidoreductase complex subunit B from Serratia proteamaculans (strain 568).